The primary structure comprises 54 residues: ATP synthase protein 8 (54 aa).

Residues 13 to 32 (ITFTFVIITLMVYILSKYIL) traverse the membrane as a helical segment.

This sequence belongs to the ATPase protein 8 family. In terms of assembly, F-type ATPases have 2 components, CF(1) - the catalytic core - and CF(0) - the membrane proton channel.

Its subcellular location is the mitochondrion membrane. In terms of biological role, mitochondrial membrane ATP synthase (F(1)F(0) ATP synthase or Complex V) produces ATP from ADP in the presence of a proton gradient across the membrane which is generated by electron transport complexes of the respiratory chain. F-type ATPases consist of two structural domains, F(1) - containing the extramembraneous catalytic core and F(0) - containing the membrane proton channel, linked together by a central stalk and a peripheral stalk. During catalysis, ATP synthesis in the catalytic domain of F(1) is coupled via a rotary mechanism of the central stalk subunits to proton translocation. Part of the complex F(0) domain. Minor subunit located with subunit a in the membrane. The chain is ATP synthase protein 8 (atp-8) from Neurospora crassa (strain ATCC 24698 / 74-OR23-1A / CBS 708.71 / DSM 1257 / FGSC 987).